The following is a 377-amino-acid chain: Succinyl-diaminopimelate desuccinylase (377 aa).

A Zn(2+)-binding site is contributed by histidine 68. Aspartate 70 is a catalytic residue. Residue aspartate 101 participates in Zn(2+) binding. Glutamate 135 functions as the Proton acceptor in the catalytic mechanism. Zn(2+) contacts are provided by glutamate 136, glutamate 164, and histidine 350.

Belongs to the peptidase M20A family. DapE subfamily. In terms of assembly, homodimer. It depends on Zn(2+) as a cofactor. Requires Co(2+) as cofactor.

The catalysed reaction is N-succinyl-(2S,6S)-2,6-diaminopimelate + H2O = (2S,6S)-2,6-diaminopimelate + succinate. It participates in amino-acid biosynthesis; L-lysine biosynthesis via DAP pathway; LL-2,6-diaminopimelate from (S)-tetrahydrodipicolinate (succinylase route): step 3/3. In terms of biological role, catalyzes the hydrolysis of N-succinyl-L,L-diaminopimelic acid (SDAP), forming succinate and LL-2,6-diaminopimelate (DAP), an intermediate involved in the bacterial biosynthesis of lysine and meso-diaminopimelic acid, an essential component of bacterial cell walls. The chain is Succinyl-diaminopimelate desuccinylase from Acinetobacter baumannii (strain AB307-0294).